The primary structure comprises 298 residues: Glutamyl-Q tRNA(Asp) synthetase (298 aa).

L-glutamate is bound by residues 12–16 (RFAPT) and E48. A 'HIGH' region motif is present at residues 15–25 (PTPSGYLHFGS). Zn(2+)-binding residues include C104, C106, Y118, and C122. 2 residues coordinate L-glutamate: Y175 and R193. Positions 231-235 (KLGKS) match the 'KMSKS' region motif. K234 lines the ATP pocket.

Belongs to the class-I aminoacyl-tRNA synthetase family. GluQ subfamily. The cofactor is Zn(2+).

Catalyzes the tRNA-independent activation of glutamate in presence of ATP and the subsequent transfer of glutamate onto a tRNA(Asp). Glutamate is transferred on the 2-amino-5-(4,5-dihydroxy-2-cyclopenten-1-yl) moiety of the queuosine in the wobble position of the QUC anticodon. This Pseudomonas fluorescens (strain ATCC BAA-477 / NRRL B-23932 / Pf-5) protein is Glutamyl-Q tRNA(Asp) synthetase.